The following is a 167-amino-acid chain: Large ribosomal subunit protein uL10 (167 aa).

The protein belongs to the universal ribosomal protein uL10 family. Part of the ribosomal stalk of the 50S ribosomal subunit. The N-terminus interacts with L11 and the large rRNA to form the base of the stalk. The C-terminus forms an elongated spine to which L12 dimers bind in a sequential fashion forming a multimeric L10(L12)X complex.

Functionally, forms part of the ribosomal stalk, playing a central role in the interaction of the ribosome with GTP-bound translation factors. The protein is Large ribosomal subunit protein uL10 of Dichelobacter nodosus (strain VCS1703A).